We begin with the raw amino-acid sequence, 236 residues long: Methylosome subunit pICln (236 aa).

Ser2 is modified (N-acetylserine). The disordered stretch occupies residues 88–109 (EESKEPPSDEDEEDNDDIEPIS). Residues Ser95, Ser143, Ser192, Ser194, Ser197, and Ser209 each carry the phosphoserine modification. The segment covering 95–107 (SDEDEEDNDDIEP) has biased composition (acidic residues). Thr222 carries the post-translational modification Phosphothreonine.

Belongs to the pICln (TC 1.A.47) family. In terms of assembly, component of the methylosome, a 20S complex containing at least PRMT5/SKB1, WDR77/MEP50 and CLNS1A/pICln. May mediate SNRPD1 and SNRPD3 methylation. Forms a 6S pICln-Sm complex composed of CLNS1A/pICln, SNRPD1, SNRPD2, SNRPE, SNRPF and SNRPG; ring-like structure where CLNS1A/pICln mimics additional Sm proteins and which is unable to assemble into the core snRNP. Interacts with LSM10 and LSM11.

The protein localises to the cytoplasm. It localises to the cytosol. The protein resides in the nucleus. Its subcellular location is the cytoskeleton. Its function is as follows. Involved in both the assembly of spliceosomal snRNPs and the methylation of Sm proteins. Chaperone that regulates the assembly of spliceosomal U1, U2, U4 and U5 small nuclear ribonucleoproteins (snRNPs), the building blocks of the spliceosome, and thereby plays an important role in the splicing of cellular pre-mRNAs. Most spliceosomal snRNPs contain a common set of Sm proteins SNRPB, SNRPD1, SNRPD2, SNRPD3, SNRPE, SNRPF and SNRPG that assemble in a heptameric protein ring on the Sm site of the small nuclear RNA to form the core snRNP (Sm core). In the cytosol, the Sm proteins SNRPD1, SNRPD2, SNRPE, SNRPF and SNRPG are trapped in an inactive 6S pICln-Sm complex by the chaperone CLNS1A that controls the assembly of the core snRNP. Dissociation by the SMN complex of CLNS1A from the trapped Sm proteins and their transfer to an SMN-Sm complex triggers the assembly of core snRNPs and their transport to the nucleus. This chain is Methylosome subunit pICln (Clns1a), found in Mus musculus (Mouse).